Here is a 342-residue protein sequence, read N- to C-terminus: Succinylglutamate desuccinylase (342 aa).

Positions 62, 65, and 158 each coordinate Zn(2+). Glutamate 222 is an active-site residue.

Belongs to the AspA/AstE family. Succinylglutamate desuccinylase subfamily. Requires Zn(2+) as cofactor.

It catalyses the reaction N-succinyl-L-glutamate + H2O = L-glutamate + succinate. It participates in amino-acid degradation; L-arginine degradation via AST pathway; L-glutamate and succinate from L-arginine: step 5/5. In terms of biological role, transforms N(2)-succinylglutamate into succinate and glutamate. This is Succinylglutamate desuccinylase from Shewanella frigidimarina (strain NCIMB 400).